Here is a 310-residue protein sequence, read N- to C-terminus: Porphobilinogen deaminase (310 aa).

Cys242 is subject to S-(dipyrrolylmethanemethyl)cysteine.

Belongs to the HMBS family. As to quaternary structure, monomer. Dipyrromethane serves as cofactor.

It catalyses the reaction 4 porphobilinogen + H2O = hydroxymethylbilane + 4 NH4(+). The protein operates within porphyrin-containing compound metabolism; protoporphyrin-IX biosynthesis; coproporphyrinogen-III from 5-aminolevulinate: step 2/4. In terms of biological role, tetrapolymerization of the monopyrrole PBG into the hydroxymethylbilane pre-uroporphyrinogen in several discrete steps. This is Porphobilinogen deaminase from Shewanella baltica (strain OS195).